Consider the following 178-residue polypeptide: Riboflavin kinase (178 aa).

Residues T39 and N41 each contribute to the Mg(2+) site. E116 acts as the Nucleophile in catalysis.

The protein belongs to the flavokinase family. The cofactor is Zn(2+). Requires Mg(2+) as cofactor.

It carries out the reaction riboflavin + ATP = FMN + ADP + H(+). Its pathway is cofactor biosynthesis; FMN biosynthesis; FMN from riboflavin (ATP route): step 1/1. Catalyzes the phosphorylation of riboflavin (vitamin B2) to form flavin mononucleotide (FMN) coenzyme. This chain is Riboflavin kinase (FMN1), found in Scheffersomyces stipitis (strain ATCC 58785 / CBS 6054 / NBRC 10063 / NRRL Y-11545) (Yeast).